Reading from the N-terminus, the 607-residue chain is Phosphomethylpyrimidine synthase (607 aa).

Substrate-binding positions include Asn-216, Met-245, Tyr-274, His-310, 330-332, 371-374, and Glu-410; these read SRG and DGLR. His-414 contacts Zn(2+). Tyr-437 serves as a coordination point for substrate. His-478 is a binding site for Zn(2+). [4Fe-4S] cluster contacts are provided by Cys-558, Cys-561, and Cys-566.

Belongs to the ThiC family. As to quaternary structure, homodimer. [4Fe-4S] cluster is required as a cofactor.

The enzyme catalyses 5-amino-1-(5-phospho-beta-D-ribosyl)imidazole + S-adenosyl-L-methionine = 4-amino-2-methyl-5-(phosphooxymethyl)pyrimidine + CO + 5'-deoxyadenosine + formate + L-methionine + 3 H(+). It participates in cofactor biosynthesis; thiamine diphosphate biosynthesis. Its function is as follows. Catalyzes the synthesis of the hydroxymethylpyrimidine phosphate (HMP-P) moiety of thiamine from aminoimidazole ribotide (AIR) in a radical S-adenosyl-L-methionine (SAM)-dependent reaction. The chain is Phosphomethylpyrimidine synthase from Agrobacterium fabrum (strain C58 / ATCC 33970) (Agrobacterium tumefaciens (strain C58)).